The sequence spans 196 residues: Calcineurin B homologous protein 2 (196 aa).

A lipid anchor (N-myristoyl glycine) is attached at Gly2. EF-hand domains follow at residues 26–61 (ASLL…AVNP), 71–106 (FPDG…PKKP), 111–146 (SRRN…MVGV), and 152–187 (QLEN…MDVE). Ser27 carries the post-translational modification Phosphoserine. Ca(2+) contacts are provided by Asp124, Asp126, Asp128, Lys130, and Glu135. The short motif at 137 to 148 (LQVLRLMVGVQV) is the Nuclear export signal element. Residues Asp165, Asp167, Asp169, and Glu176 each contribute to the Ca(2+) site.

This sequence belongs to the calcineurin regulatory subunit family. CHP subfamily. In terms of assembly, interacts with PPP3CA. Interacts with SLC9A1/NHE1; the interaction occurs in a calcium-dependent manner. In terms of tissue distribution, expressed in malignantly transformed cells but not detected in normal tissues.

Its subcellular location is the nucleus. The protein resides in the cytoplasm. The protein localises to the cell membrane. Its function is as follows. Functions as an integral cofactor in cell pH regulation by controlling plasma membrane-type Na(+)/H(+) exchange activity. Binds to and activates SLC9A1/NHE1 in a serum-independent manner, thus increasing pH and protecting cells from serum deprivation-induced death. Also plays a role in the regulation of cell proliferation and tumor growth by increasing the phosphatase activity of PPP3CA in a calcium-dependent manner. Activator of the calcineurin/NFAT signaling pathway. Involved in the cytoplasmic translocation of the transcription factor NFATC3 to the nucleus. The chain is Calcineurin B homologous protein 2 (CHP2) from Homo sapiens (Human).